Reading from the N-terminus, the 688-residue chain is Nucleolar protein 10 (688 aa).

An N-acetylmethionine modification is found at M1. S25 bears the Phosphoserine mark. WD repeat units follow at residues E44 to T82, K88 to Q124, F127 to L163, N170 to P205, N219 to L258, K262 to K300, and K304 to I341. The stretch at E423–L446 forms a coiled coil. S475 bears the Phosphoserine mark. A Phosphothreonine modification is found at T481. Residue S514 is modified to Phosphoserine. 2 coiled-coil regions span residues S514–K589 and S640–S673. Disordered stretches follow at residues L529 to W557 and F645 to H688. A compositionally biased stretch (basic and acidic residues) spans K648–H663. Residues R664–H688 show a composition bias toward basic residues.

It belongs to the WD repeat NOL10/ENP2 family.

It localises to the nucleus. The protein resides in the nucleolus. The sequence is that of Nucleolar protein 10 (NOL10) from Homo sapiens (Human).